A 304-amino-acid chain; its full sequence is Ribonuclease BN (304 aa).

Zn(2+) contacts are provided by H63, H65, D67, H68, H140, D211, and H269. D67 serves as the catalytic Proton acceptor.

The protein belongs to the RNase Z family. RNase BN subfamily. As to quaternary structure, homodimer. The cofactor is Zn(2+).

Functionally, zinc phosphodiesterase, which has both exoribonuclease and endoribonuclease activities. This Cronobacter sakazakii (strain ATCC BAA-894) (Enterobacter sakazakii) protein is Ribonuclease BN.